A 286-amino-acid chain; its full sequence is ATP synthase gamma chain (286 aa).

This sequence belongs to the ATPase gamma chain family. F-type ATPases have 2 components, CF(1) - the catalytic core - and CF(0) - the membrane proton channel. CF(1) has five subunits: alpha(3), beta(3), gamma(1), delta(1), epsilon(1). CF(0) has three main subunits: a, b and c.

The protein resides in the cell membrane. Produces ATP from ADP in the presence of a proton gradient across the membrane. The gamma chain is believed to be important in regulating ATPase activity and the flow of protons through the CF(0) complex. The protein is ATP synthase gamma chain of Bacillus anthracis (strain A0248).